The sequence spans 434 residues: Gamma-enolase (434 aa).

Positions 158 and 167 each coordinate substrate. The active-site Proton donor is the glutamate 210. 3 residues coordinate Mg(2+): aspartate 245, glutamate 293, and aspartate 318. 2 residues coordinate substrate: glutamate 293 and aspartate 318. Lysine 343 (proton acceptor) is an active-site residue. Residues 370-373 (SHRS) and lysine 394 contribute to the substrate site.

It belongs to the enolase family. As to quaternary structure, homodimer. Requires Mg(2+) as cofactor. As to expression, expressed in the brain and, to much less but significant extents, in the pituitary and adrenal glands.

Its subcellular location is the cytoplasm. The catalysed reaction is (2R)-2-phosphoglycerate = phosphoenolpyruvate + H2O. Its pathway is carbohydrate degradation; glycolysis; pyruvate from D-glyceraldehyde 3-phosphate: step 4/5. In Gallus gallus (Chicken), this protein is Gamma-enolase (ENO2).